A 141-amino-acid chain; its full sequence is Large ribosomal subunit protein bL21 (141 aa).

Residues 111-141 (ATAPSRTEAAPESNPEAAPSAAATGIPADEE) are disordered. The segment covering 118–133 (EAAPESNPEAAPSAAA) has biased composition (low complexity).

The protein belongs to the bacterial ribosomal protein bL21 family. In terms of assembly, part of the 50S ribosomal subunit. Contacts protein L20.

In terms of biological role, this protein binds to 23S rRNA in the presence of protein L20. This is Large ribosomal subunit protein bL21 from Synechococcus sp. (strain JA-2-3B'a(2-13)) (Cyanobacteria bacterium Yellowstone B-Prime).